Reading from the N-terminus, the 697-residue chain is Glycine--tRNA ligase beta subunit (697 aa).

The protein belongs to the class-II aminoacyl-tRNA synthetase family. Tetramer of two alpha and two beta subunits.

It localises to the cytoplasm. It catalyses the reaction tRNA(Gly) + glycine + ATP = glycyl-tRNA(Gly) + AMP + diphosphate. This chain is Glycine--tRNA ligase beta subunit, found in Ralstonia nicotianae (strain ATCC BAA-1114 / GMI1000) (Ralstonia solanacearum).